Consider the following 492-residue polypeptide: Glutamyl-tRNA(Gln) amidotransferase subunit A (492 aa).

Catalysis depends on charge relay system residues Lys-78 and Ser-158. Catalysis depends on Ser-182, which acts as the Acyl-ester intermediate.

Belongs to the amidase family. GatA subfamily. As to quaternary structure, heterotrimer of A, B and C subunits.

It catalyses the reaction L-glutamyl-tRNA(Gln) + L-glutamine + ATP + H2O = L-glutaminyl-tRNA(Gln) + L-glutamate + ADP + phosphate + H(+). Its function is as follows. Allows the formation of correctly charged Gln-tRNA(Gln) through the transamidation of misacylated Glu-tRNA(Gln) in organisms which lack glutaminyl-tRNA synthetase. The reaction takes place in the presence of glutamine and ATP through an activated gamma-phospho-Glu-tRNA(Gln). The chain is Glutamyl-tRNA(Gln) amidotransferase subunit A from Orientia tsutsugamushi (strain Ikeda) (Rickettsia tsutsugamushi).